The sequence spans 299 residues: Probable transport accessory protein MmpS3 (299 aa).

The disordered stretch occupies residues 1–72 (MSGPNPPGRE…EHVTGGPYVP (72 aa)). The chain crosses the membrane as a helical span at residues 101–121 (VVGVAAIIAAVALVVSVSLLV). A compositionally biased stretch (polar residues) spans 128-139 (KLATGDTTSSAP). The segment at 128–213 (KLATGDTTSS…TTTTPTGPRQ (86 aa)) is disordered. Residues 150-163 (PAPPPPPPAPPPTT) are compositionally biased toward pro residues. The span at 164 to 176 (EIPTATETQTVTV) shows a compositional bias: low complexity. Over residues 177–193 (TPPPPPPPATTTAPPPA) the composition is skewed to pro residues.

This sequence belongs to the MmpS family.

The protein resides in the cell membrane. In Mycobacterium tuberculosis (strain CDC 1551 / Oshkosh), this protein is Probable transport accessory protein MmpS3 (mmpS3).